The primary structure comprises 242 residues: Biosynthetic peptidoglycan transglycosylase (242 aa).

Residues 19–39 (LMVVLAVFWGGGIALFSVAPV) form a helical membrane-spanning segment.

This sequence belongs to the glycosyltransferase 51 family.

It is found in the cell inner membrane. The enzyme catalyses [GlcNAc-(1-&gt;4)-Mur2Ac(oyl-L-Ala-gamma-D-Glu-L-Lys-D-Ala-D-Ala)](n)-di-trans,octa-cis-undecaprenyl diphosphate + beta-D-GlcNAc-(1-&gt;4)-Mur2Ac(oyl-L-Ala-gamma-D-Glu-L-Lys-D-Ala-D-Ala)-di-trans,octa-cis-undecaprenyl diphosphate = [GlcNAc-(1-&gt;4)-Mur2Ac(oyl-L-Ala-gamma-D-Glu-L-Lys-D-Ala-D-Ala)](n+1)-di-trans,octa-cis-undecaprenyl diphosphate + di-trans,octa-cis-undecaprenyl diphosphate + H(+). It functions in the pathway cell wall biogenesis; peptidoglycan biosynthesis. Functionally, peptidoglycan polymerase that catalyzes glycan chain elongation from lipid-linked precursors. This chain is Biosynthetic peptidoglycan transglycosylase, found in Escherichia coli O17:K52:H18 (strain UMN026 / ExPEC).